We begin with the raw amino-acid sequence, 1537 residues long: Isocyanide synthase-NRPS hybrid crmA (1537 aa).

Residues Met-1 to Phe-502 form an isocyanide synthase domain region. The segment at Pro-351–Thr-391 is disordered. Positions Ser-352 to Thr-381 are enriched in low complexity. The span at Pro-382–Thr-391 shows a compositional bias: polar residues. Residues Glu-573–Trp-752 are adenylation. The 79-residue stretch at Ser-941–Ala-1019 folds into the Carrier domain. Ser-977 carries the O-(pantetheine 4'-phosphoryl)serine modification. The tract at residues Arg-1293–Phe-1526 is transferase.

It in the N-terminal section; belongs to the isocyanide synthase family. The protein in the C-terminal section; belongs to the NRP synthetase family.

It functions in the pathway secondary metabolite biosynthesis. In terms of biological role, isocyanide synthase-NRPS hybrid; part of the crm gene cluster that mediates the biosynthesis of a yet unidentified copper-responsive metabolite. Converts valine into valine isocyanide that then contributes to two distinct biosynthetic pathways under copper-limiting conditions. Reaction of valine isocyanide with the imine intermediate of festuclavine results in formation of the amide bond in fumivaline A. In addition, valine isocyanide contributes to biosynthesis of a family of acylated sugar alcohols, the D-mannitol-derived fumicicolins. CrmA and associated products inhibit microbial growth from copper-starved A.fumigatus. This chain is Isocyanide synthase-NRPS hybrid crmA, found in Aspergillus fumigatus (strain ATCC MYA-4609 / CBS 101355 / FGSC A1100 / Af293) (Neosartorya fumigata).